Consider the following 178-residue polypeptide: MSRIGNKVIVLPAGVELANNDNVVTVKGPKGELTREFSKDIEIRVEGTEITXHRPNDSKEMKTIHGTTRALLNNMVVGVSEGFKKELEMRGVGYRAQLQGSKLVLAVGKSHPDEVEAPEGITFELPNPTTIVVSGISKEVVGQTAAYVRSLRSPEPYKGKGIRYVGEFVRRKEGKTGK.

It belongs to the universal ribosomal protein uL6 family. As to quaternary structure, part of the 50S ribosomal subunit.

This protein binds to the 23S rRNA, and is important in its secondary structure. It is located near the subunit interface in the base of the L7/L12 stalk, and near the tRNA binding site of the peptidyltransferase center. This is Large ribosomal subunit protein uL6 from Streptococcus pneumoniae serotype 19F (strain G54).